The chain runs to 341 residues: Uroporphyrinogen decarboxylase (341 aa).

Substrate contacts are provided by residues 23-27 (RQAGR), Asp-73, Tyr-147, Ser-202, and His-318.

The protein belongs to the uroporphyrinogen decarboxylase family. As to quaternary structure, homodimer.

The protein localises to the cytoplasm. The catalysed reaction is uroporphyrinogen III + 4 H(+) = coproporphyrinogen III + 4 CO2. It functions in the pathway porphyrin-containing compound metabolism; protoporphyrin-IX biosynthesis; coproporphyrinogen-III from 5-aminolevulinate: step 4/4. Its function is as follows. Catalyzes the decarboxylation of four acetate groups of uroporphyrinogen-III to yield coproporphyrinogen-III. This is Uroporphyrinogen decarboxylase from Erythrobacter litoralis (strain HTCC2594).